We begin with the raw amino-acid sequence, 429 residues long: Adenylosuccinate synthetase (429 aa).

Residues 13–19 (GDEGKGK) and 41–43 (GHT) contribute to the GTP site. Asp14 acts as the Proton acceptor in catalysis. Positions 14 and 41 each coordinate Mg(2+). IMP-binding positions include 14-17 (DEGK), 39-42 (NAGH), Thr130, Arg144, Gln224, Thr239, and Arg303. His42 acts as the Proton donor in catalysis. Residue 299–305 (ATTGRAR) participates in substrate binding. GTP-binding positions include Arg305, 331–333 (KLD), and 412–414 (STG).

Belongs to the adenylosuccinate synthetase family. In terms of assembly, homodimer. Mg(2+) serves as cofactor.

Its subcellular location is the cytoplasm. It catalyses the reaction IMP + L-aspartate + GTP = N(6)-(1,2-dicarboxyethyl)-AMP + GDP + phosphate + 2 H(+). The protein operates within purine metabolism; AMP biosynthesis via de novo pathway; AMP from IMP: step 1/2. Plays an important role in the de novo pathway of purine nucleotide biosynthesis. Catalyzes the first committed step in the biosynthesis of AMP from IMP. This is Adenylosuccinate synthetase from Psychrobacter sp. (strain PRwf-1).